Here is a 379-residue protein sequence, read N- to C-terminus: Carbamoyl phosphate synthase small chain (379 aa).

A CPSase region spans residues 1-187; it reads MNFTPALLAL…GSGHAPAPAS (187 aa). Residues Ser-48, Gly-239, and Gly-241 each coordinate L-glutamine. The 188-residue stretch at 191-378 folds into the Glutamine amidotransferase type-1 domain; it reads KVVAYDFGVK…IELMKPQGVR (188 aa). Residue Cys-267 is the Nucleophile of the active site. Leu-268, Gln-271, Asn-309, Gly-311, and Phe-312 together coordinate L-glutamine. Catalysis depends on residues His-351 and Glu-353.

It belongs to the CarA family. In terms of assembly, composed of two chains; the small (or glutamine) chain promotes the hydrolysis of glutamine to ammonia, which is used by the large (or ammonia) chain to synthesize carbamoyl phosphate. Tetramer of heterodimers (alpha,beta)4.

It carries out the reaction hydrogencarbonate + L-glutamine + 2 ATP + H2O = carbamoyl phosphate + L-glutamate + 2 ADP + phosphate + 2 H(+). It catalyses the reaction L-glutamine + H2O = L-glutamate + NH4(+). It participates in amino-acid biosynthesis; L-arginine biosynthesis; carbamoyl phosphate from bicarbonate: step 1/1. It functions in the pathway pyrimidine metabolism; UMP biosynthesis via de novo pathway; (S)-dihydroorotate from bicarbonate: step 1/3. Its function is as follows. Small subunit of the glutamine-dependent carbamoyl phosphate synthetase (CPSase). CPSase catalyzes the formation of carbamoyl phosphate from the ammonia moiety of glutamine, carbonate, and phosphate donated by ATP, constituting the first step of 2 biosynthetic pathways, one leading to arginine and/or urea and the other to pyrimidine nucleotides. The small subunit (glutamine amidotransferase) binds and cleaves glutamine to supply the large subunit with the substrate ammonia. The chain is Carbamoyl phosphate synthase small chain from Thioalkalivibrio sulfidiphilus (strain HL-EbGR7).